A 67-amino-acid polypeptide reads, in one-letter code: Large ribosomal subunit protein bL35 (67 aa).

Belongs to the bacterial ribosomal protein bL35 family.

This is Large ribosomal subunit protein bL35 from Sphingopyxis alaskensis (strain DSM 13593 / LMG 18877 / RB2256) (Sphingomonas alaskensis).